Consider the following 233-residue polypeptide: Orotidine 5'-phosphate decarboxylase (233 aa).

Residues Asp12, Lys34, 61-70, Thr120, Arg181, Gln190, Gly210, and Arg211 each bind substrate; that span reads DLKFHDIPNT. Residue Lys63 is the Proton donor of the active site.

The protein belongs to the OMP decarboxylase family. Type 1 subfamily. As to quaternary structure, homodimer.

The enzyme catalyses orotidine 5'-phosphate + H(+) = UMP + CO2. The protein operates within pyrimidine metabolism; UMP biosynthesis via de novo pathway; UMP from orotate: step 2/2. Its function is as follows. Catalyzes the decarboxylation of orotidine 5'-monophosphate (OMP) to uridine 5'-monophosphate (UMP). The chain is Orotidine 5'-phosphate decarboxylase from Hahella chejuensis (strain KCTC 2396).